The following is a 591-amino-acid chain: UvrABC system protein C (591 aa).

Positions 14 to 91 (DSPGCYLHKD…IQKNMPKYNI (78 aa)) constitute a GIY-YIG domain. Residues 196–231 (DKIVTGLKEKMLAASQAMEFERAAEYRDLISGIATL) enclose the UVR domain.

This sequence belongs to the UvrC family. Interacts with UvrB in an incision complex.

The protein resides in the cytoplasm. In terms of biological role, the UvrABC repair system catalyzes the recognition and processing of DNA lesions. UvrC both incises the 5' and 3' sides of the lesion. The N-terminal half is responsible for the 3' incision and the C-terminal half is responsible for the 5' incision. This Streptococcus uberis (strain ATCC BAA-854 / 0140J) protein is UvrABC system protein C.